Here is a 210-residue protein sequence, read N- to C-terminus: Small ribosomal subunit protein uS3 (210 aa).

A KH type-2 domain is found at 17 to 86; that stretch reads IDEFLEKELR…NPQIEVEEIK (70 aa).

This sequence belongs to the universal ribosomal protein uS3 family. Part of the 30S ribosomal subunit.

Binds the lower part of the 30S subunit head. This Pyrococcus furiosus (strain ATCC 43587 / DSM 3638 / JCM 8422 / Vc1) protein is Small ribosomal subunit protein uS3.